The sequence spans 320 residues: Nuclease (320 aa).

The active-site Proton acceptor is the His-155. Asn-187 provides a ligand contact to Mg(2+). Residue Asn-204 is glycosylated (N-linked (GlcNAc...) asparagine). Cys-312 and Cys-317 form a disulfide bridge.

This sequence belongs to the DNA/RNA non-specific endonuclease family. In terms of assembly, homodimer; as a result of non-covalent interactions and not through the disulfide linkages between the two monomers. It depends on Mg(2+) as a cofactor. Mn(2+) serves as cofactor. In terms of processing, glycosylated.

The protein localises to the secreted. Its function is as follows. This enzyme has both RNase and DNase activity. This is Nuclease from Syncephalastrum racemosum (Filamentous fungus).